The following is a 471-amino-acid chain: U1 small nuclear ribonucleoprotein 70 kDa (471 aa).

A disordered region spans residues 48 to 78 (FEDPRDAPPPTRAETREERMERKRREKIERR). Positions 60 to 78 (AETREERMERKRREKIERR) are enriched in basic and acidic residues. A required for interaction with U1 RNA region spans residues 92 to 205 (HNDQNAQGDA…GGGLGGTRRG (114 aa)). Residues 103–184 (KTLFVARVNY…RRVLVDVERG (82 aa)) enclose the RRM domain. The interval 190-471 (WRPRRLGGGL…NGYMMEPPME (282 aa)) is disordered. Over residues 195–204 (LGGGLGGTRR) the composition is skewed to gly residues. Positions 210-246 (NIRHSGRDDTSRYDERDRERERDRRERSREREKEPRE) are enriched in basic and acidic residues. The segment covering 247–261 (RRRSRSRERRRKSRS) has biased composition (basic residues). Basic and acidic residues predominate over residues 262–288 (REKEERKRTREKSKDKDKEKDKDNKDR). Over residues 289-298 (DRKRRSRSRE) the composition is skewed to basic residues. Positions 299 to 316 (RKRERDRDREKKEERVEA) are enriched in basic and acidic residues. The span at 317-326 (EVPEADDAPQ) shows a compositional bias: acidic residues. Residues 339-428 (IELKQEPEEK…RSEKREERVP (90 aa)) show a composition bias toward basic and acidic residues.

As to quaternary structure, component of the U1 snRNP. The U1 snRNP is composed of the U1 snRNA and the 7 core Sm proteins snrpb, snrpd1, snrpd2, snrpd3, snrpe, snrpf and snrpg that assemble in a heptameric protein ring on the Sm site of the small nuclear RNA to form the core snRNP, and at least three U1 snRNP-specific proteins snrnp70/U1-70K, snrpa/U1-A and snrpc/U1-C.

It localises to the nucleus speckle. It is found in the nucleus. The protein resides in the nucleoplasm. In terms of biological role, component of the spliceosomal U1 snRNP, which is essential for recognition of the pre-mRNA 5' splice-site and the subsequent assembly of the spliceosome. snrnp70 binds to the loop I region of U1-snRNA. In Xenopus laevis (African clawed frog), this protein is U1 small nuclear ribonucleoprotein 70 kDa (snrnp70).